The sequence spans 123 residues: Ribosome-binding factor A (123 aa).

Belongs to the RbfA family. Monomer. Binds 30S ribosomal subunits, but not 50S ribosomal subunits or 70S ribosomes.

It is found in the cytoplasm. One of several proteins that assist in the late maturation steps of the functional core of the 30S ribosomal subunit. Associates with free 30S ribosomal subunits (but not with 30S subunits that are part of 70S ribosomes or polysomes). Required for efficient processing of 16S rRNA. May interact with the 5'-terminal helix region of 16S rRNA. The polypeptide is Ribosome-binding factor A (Rickettsia bellii (strain OSU 85-389)).